The following is a 391-amino-acid chain: Phosphopentomutase (391 aa).

Residues D12, D285, H290, D326, H327, and H338 each coordinate Mn(2+).

Belongs to the phosphopentomutase family. Requires Mn(2+) as cofactor.

It localises to the cytoplasm. It catalyses the reaction 2-deoxy-alpha-D-ribose 1-phosphate = 2-deoxy-D-ribose 5-phosphate. It carries out the reaction alpha-D-ribose 1-phosphate = D-ribose 5-phosphate. It participates in carbohydrate degradation; 2-deoxy-D-ribose 1-phosphate degradation; D-glyceraldehyde 3-phosphate and acetaldehyde from 2-deoxy-alpha-D-ribose 1-phosphate: step 1/2. Its function is as follows. Isomerase that catalyzes the conversion of deoxy-ribose 1-phosphate (dRib-1-P) and ribose 1-phosphate (Rib-1-P) to deoxy-ribose 5-phosphate (dRib-5-P) and ribose 5-phosphate (Rib-5-P), respectively. In Herpetosiphon aurantiacus (strain ATCC 23779 / DSM 785 / 114-95), this protein is Phosphopentomutase.